We begin with the raw amino-acid sequence, 519 residues long: Flavonoid 8-hydroxylase 2, chloroplastic (519 aa).

The transit peptide at 1 to 46 directs the protein to the chloroplast; it reads MEVLQASSLSFQLLRRHSRNNLINKFRNPSLPRIHMPRQNIDLKTF. One can recognise a Rieske domain in the interval 77-188; the sequence is WYPVASVCDL…SCVRNGIVWF (112 aa). [2Fe-2S] cluster is bound by residues Cys119, His121, Cys139, and His142. The Fe cation site is built by His241 and His246. Positions 447–450 match the Redox-active motif motif; the sequence is CSSC. The next 2 helical transmembrane spans lie at 462–478 and 485–501; these read IGLQAMSLVFVAMAAAV and YSMVAMAVLSFLASKWL.

[2Fe-2S] cluster is required as a cofactor. In terms of tissue distribution, glandular trichome-specific expression in leaves.

It localises to the plastid. The protein resides in the chloroplast membrane. It is found in the cytoplasm. The enzyme catalyses salvigenin + 2 reduced [2Fe-2S]-[ferredoxin] + O2 + 2 H(+) = 8-hydroxysalvigenin + 2 oxidized [2Fe-2S]-[ferredoxin] + H2O. It functions in the pathway flavonoid metabolism. Rieske-type, PAO-family oxygenase involved in the biosynthesis of polymethoxylated flavonoids natural products such as nevadensin and salvigenin, aroma compounds which contribute to the flavor of sweet basil, and exhibit pharmacological activities such as anti-allergic, anti-oxidant, antibacterial, anti-proliferative, and anti-inflammatory effects. Catalyzes the hydroxylation of salvigenin to produce 8-hydroxysalvigenin (8-OH-SALV). The chain is Flavonoid 8-hydroxylase 2, chloroplastic from Ocimum basilicum (Sweet basil).